Here is a 299-residue protein sequence, read N- to C-terminus: Cuticle collagen 34 (299 aa).

Positions 105 to 282 (PGPAGTPGKP…GSPGERGICP (178 aa)) are disordered. The span at 129 to 162 (PGRPPQQPCEPITPPPCKPCPQGPPGPPGPPGPP) shows a compositional bias: pro residues. Residues 164–181 (DSGEPGSPGLPGQDAAPG) are compositionally biased toward low complexity. Composition is skewed to pro residues over residues 182–195 (EPGPKGPPGPPGAP) and 215–233 (PGEPGPPGEAGPQGPPGSP). Positions 216-278 (GEPGPPGEAG…AGPPGSPGER (63 aa)) are triple-helical region. Residues 251 to 263 (NGPDGQPGADGNP) are compositionally biased toward low complexity. Residues 265–274 (APGPAGPPGS) are compositionally biased toward pro residues.

The protein belongs to the cuticular collagen family. As to quaternary structure, collagen polypeptide chains are complexed within the cuticle by disulfide bonds and other types of covalent cross-links.

Its function is as follows. Nematode cuticles are composed largely of collagen-like proteins. The cuticle functions both as an exoskeleton and as a barrier to protect the worm from its environment. The sequence is that of Cuticle collagen 34 (col-34) from Caenorhabditis elegans.